Here is a 650-residue protein sequence, read N- to C-terminus: Protein KINESIN LIGHT CHAIN-RELATED 3 (650 aa).

The tract at residues 104–141 (EKQTGKKNVTKSNVGVGGMRKKKVGGTKLQNGNEEPSS) is disordered. The segment covering 131 to 141 (KLQNGNEEPSS) has biased composition (polar residues). TPR repeat units follow at residues 192–225 (IMCL…PVVE), 235–268 (FAGL…QKKV), 277–310 (GETC…HRES), 319–353 (AADR…AANG), 359–392 (AFVD…LKTA), 401–434 (GSVY…YESH), 444–477 (ASGL…YADS), 485–518 (AGIE…LRAT), 527–560 (GIAL…LEQE), and 569–602 (LGLY…REEK).

Belongs to the kinesin light chain family.

The chain is Protein KINESIN LIGHT CHAIN-RELATED 3 from Arabidopsis thaliana (Mouse-ear cress).